The chain runs to 938 residues: AP-2 complex subunit alpha-2 (938 aa).

Residues 11 to 12 (RG), Lys43, Tyr53, and 57 to 61 (KYVCK) contribute to the a 1,2-diacyl-sn-glycero-3-phospho-(1D-myo-inositol-3,4,5-trisphosphate) site. Positions 615–681 (LKKKKGPSTV…TGPPPSSGGG (67 aa)) are disordered. The segment covering 646–667 (PASTSAASTPSPSADLLGLGAV) has biased composition (low complexity). The span at 668 to 677 (PPAPTGPPPS) shows a compositional bias: pro residues.

Belongs to the adaptor complexes large subunit family. Adaptor protein complex 2 (AP-2) is a heterotetramer composed of two large adaptins (alpha-type subunit AP2A1 or AP2A2 and beta-type subunit AP2B1), a medium adaptin (mu-type subunit AP2M1) and a small adaptin (sigma-type subunit AP2S1). Interacts with clathrin. Binds EPN1, EPS15, AMPH, SNAP91 and BIN1. Interacts with HIP1. Interacts with DGKD. Interacts with DENND1A, DENND1B and DENND1C. Interacts with FCHO1 and DAB2. Interacts with ATAT1; this interaction is required for efficient alpha-tubulin acetylation by ATAT1. Interacts with KIAA1107. Together with AP2B1 and AP2M1, it interacts with ADAM10; this interaction facilitates ADAM10 endocytosis from the plasma membrane during long-term potentiation in hippocampal neurons. Interacts with CLN3 (via dileucine motif). Interacts with ABCB11; this interaction regulates cell membrane expression of ABCB11 through its internalization in a clathrin-dependent manner and its subsequent degradation. Interacts with Cacfd1. Interacts with DNAJC6. Widely expressed.

The protein localises to the cell membrane. Its subcellular location is the membrane. It localises to the coated pit. Component of the adaptor protein complex 2 (AP-2). Adaptor protein complexes function in protein transport via transport vesicles in different membrane traffic pathways. Adaptor protein complexes are vesicle coat components and appear to be involved in cargo selection and vesicle formation. AP-2 is involved in clathrin-dependent endocytosis in which cargo proteins are incorporated into vesicles surrounded by clathrin (clathrin-coated vesicles, CCVs) which are destined for fusion with the early endosome. The clathrin lattice serves as a mechanical scaffold but is itself unable to bind directly to membrane components. Clathrin-associated adaptor protein (AP) complexes which can bind directly to both the clathrin lattice and to the lipid and protein components of membranes are considered to be the major clathrin adaptors contributing the CCV formation. AP-2 also serves as a cargo receptor to selectively sort the membrane proteins involved in receptor-mediated endocytosis. AP-2 seems to play a role in the recycling of synaptic vesicle membranes from the presynaptic surface. AP-2 recognizes Y-X-X-[FILMV] (Y-X-X-Phi) and [ED]-X-X-X-L-[LI] endocytosis signal motifs within the cytosolic tails of transmembrane cargo molecules. AP-2 may also play a role in maintaining normal post-endocytic trafficking through the ARF6-regulated, non-clathrin pathway. During long-term potentiation in hippocampal neurons, AP-2 is responsible for the endocytosis of ADAM10. The AP-2 alpha subunit binds polyphosphoinositide-containing lipids, positioning AP-2 on the membrane. The AP-2 alpha subunit acts via its C-terminal appendage domain as a scaffolding platform for endocytic accessory proteins. The AP-2 alpha and AP-2 sigma subunits are thought to contribute to the recognition of the [ED]-X-X-X-L-[LI] motif. The chain is AP-2 complex subunit alpha-2 from Rattus norvegicus (Rat).